Reading from the N-terminus, the 29-residue chain is Protein Tat (29 aa).

The disordered stretch occupies residues 1-29 (PSSQPRGDPTGQEEPKKKVEKKTTTDPFD). The Cell attachment site signature appears at 6-8 (RGD). The span at 13 to 29 (EEPKKKVEKKTTTDPFD) shows a compositional bias: basic and acidic residues.

Belongs to the lentiviruses Tat family. In terms of assembly, interacts with host CCNT1. Associates with the P-TEFb complex composed at least of Tat, P-TEFb (CDK9 and CCNT1), TAR RNA, RNA Pol II. Recruits the HATs CREBBP, TAF1/TFIID, EP300, PCAF and GCN5L2. Interacts with host KAT5/Tip60; this interaction targets the latter to degradation. Interacts with the host deacetylase SIRT1. Interacts with host capping enzyme RNGTT; this interaction stimulates RNGTT. Binds to host KDR, and to the host integrins ITGAV/ITGB3 and ITGA5/ITGB1. Interacts with host KPNB1/importin beta-1 without previous binding to KPNA1/importin alpha-1. Interacts with EIF2AK2. Interacts with host nucleosome assembly protein NAP1L1; this interaction may be required for the transport of Tat within the nucleus, since the two proteins interact at the nuclear rim. Interacts with host C1QBP/SF2P32; this interaction involves lysine-acetylated Tat. Interacts with the host chemokine receptors CCR2, CCR3 and CXCR4. Interacts with host DPP4/CD26; this interaction may trigger an anti-proliferative effect. Interacts with host LDLR. Interacts with the host extracellular matrix metalloproteinase MMP1. Interacts with host PRMT6; this interaction mediates Tat's methylation. Interacts with, and is ubiquitinated by MDM2/Hdm2. Interacts with host PSMC3 and HTATIP2. Interacts with STAB1; this interaction may overcome SATB1-mediated repression of IL2 and IL2RA (interleukin) in T cells by binding to the same domain than HDAC1. Interacts (when acetylated) with human CDK13, thereby increasing HIV-1 mRNA splicing and promoting the production of the doubly spliced HIV-1 protein Nef. Acetylation by EP300, CREBBP, GCN5L2/GCN5 and PCAF regulates the transactivation activity of Tat. In terms of processing, phosphorylated by EIF2AK2 on serine and threonine residues adjacent to the basic region important for TAR RNA binding and function. Phosphorylation of Tat by EIF2AK2 is dependent on the prior activation of EIF2AK2 by dsRNA. Post-translationally, asymmetrical arginine methylation by host PRMT6 seems to diminish the transactivation capacity of Tat and affects the interaction with host CCNT1. Polyubiquitination by MDM2 does not target Tat to degradation, but activates its transactivation function and fosters interaction with CCNT1 and TAR RNA.

It localises to the host nucleus. Its subcellular location is the host nucleolus. The protein resides in the host cytoplasm. The protein localises to the secreted. In terms of biological role, transcriptional activator that increases RNA Pol II processivity, thereby increasing the level of full-length viral transcripts. Recognizes a hairpin structure at the 5'-LTR of the nascent viral mRNAs referred to as the transactivation responsive RNA element (TAR) and recruits the cyclin T1-CDK9 complex (P-TEFb complex) that will in turn hyperphosphorylate the RNA polymerase II to allow efficient elongation. The CDK9 component of P-TEFb and other Tat-activated kinases hyperphosphorylate the C-terminus of RNA Pol II that becomes stabilized and much more processive. Other factors such as HTATSF1/Tat-SF1, SUPT5H/SPT5, and HTATIP2 are also important for Tat's function. Besides its effect on RNA Pol II processivity, Tat induces chromatin remodeling of proviral genes by recruiting the histone acetyltransferases (HATs) CREBBP, EP300 and PCAF to the chromatin. This also contributes to the increase in proviral transcription rate, especially when the provirus integrates in transcriptionally silent region of the host genome. To ensure maximal activation of the LTR, Tat mediates nuclear translocation of NF-kappa-B by interacting with host RELA. Through its interaction with host TBP, Tat may also modulate transcription initiation. Tat can reactivate a latently infected cell by penetrating in it and transactivating its LTR promoter. In the cytoplasm, Tat is thought to act as a translational activator of HIV-1 mRNAs. Its function is as follows. Extracellular circulating Tat can be endocytosed by surrounding uninfected cells via the binding to several surface receptors such as CD26, CXCR4, heparan sulfate proteoglycans (HSPG) or LDLR. Neurons are rarely infected, but they internalize Tat via their LDLR. Endosomal low pH allows Tat to cross the endosome membrane to enter the cytosol and eventually further translocate into the nucleus, thereby inducing severe cell dysfunctions ranging from cell activation to cell death. Through its interaction with nuclear HATs, Tat is potentially able to control the acetylation-dependent cellular gene expression. Tat seems to inhibit the HAT activity of KAT5/Tip60 and TAF1, and consequently modify the expression of specific cellular genes. Modulates the expression of many cellular genes involved in cell survival, proliferation or in coding for cytokines (such as IL10) or cytokine receptors. May be involved in the derepression of host interleukin IL2 expression. Mediates the activation of cyclin-dependent kinases and dysregulation of microtubule network. Tat plays a role in T-cell and neurons apoptosis. Tat induced neurotoxicity and apoptosis probably contribute to neuroAIDS. Host extracellular matrix metalloproteinase MMP1 cleaves Tat and decreases Tat's mediated neurotoxicity. Circulating Tat also acts as a chemokine-like and/or growth factor-like molecule that binds to specific receptors on the surface of the cells, affecting many cellular pathways. In the vascular system, Tat binds to ITGAV/ITGB3 and ITGA5/ITGB1 integrins dimers at the surface of endothelial cells and competes with bFGF for heparin-binding sites, leading to an excess of soluble bFGF. Binds to KDR/VEGFR-2. All these Tat-mediated effects enhance angiogenesis in Kaposi's sarcoma lesions. This is Protein Tat from Homo sapiens (Human).